Reading from the N-terminus, the 602-residue chain is Leucine-rich repeat-containing protein 40 (602 aa).

Residues 1–22 (MSRLKRIAGQDPRAGFKEGGRD) form a disordered region. Residue S71 is modified to Phosphoserine. LRR repeat units lie at residues 83–104 (DLTKLIISNNKLQSLTDDLRLL), 106–127 (ALTVLDIHDNQLTSLPSAIREL), 129–150 (NLQKLNVSHNKLKILPEEITNL), 152–173 (NLKCLYLQHNELTCISEGFEQF), 175–196 (NLEDLDLSNNRLTTVPASFSSL), 198–219 (SLVRLNLSSNELKSLPAEINRM), 221–242 (RLKHLDCNSNLLETIPPELAGM), 244–265 (SLELLYLRRNKLRFLPEFPSCS), 266–286 (LLKELHVGENQIEMLEAEHLK), 290–311 (SILVLDLRDNKLKSVPDEIILL), 313–335 (SLERLDLSNNDISSLPYSLGNLH), 336–356 (LKFLALEGNPLRTIRREIINK), 400–421 (TLKILDYSDKQATLIPDEVFDA), 426–447 (IITSINFSKNQLCEIPKRMVEL), 450–472 (MVSDVNLSFNKLSFISLELCVLQ), 473–494 (KLTFLDLRNNFLNSLPEEVESL), 496–517 (RLQTINLSFNRFKMLPEVLYRI), 519–540 (TLETILISNNQVGSVDPQKMKM), 543–564 (NLTTLDLQNNDLLQIPPELGNC), and 566–586 (NLRTLLLDGNPFRVPRAAILM).

This is Leucine-rich repeat-containing protein 40 (LRRC40) from Pongo abelii (Sumatran orangutan).